A 121-amino-acid polypeptide reads, in one-letter code: Large ribosomal subunit protein uL14 (121 aa).

This sequence belongs to the universal ribosomal protein uL14 family. In terms of assembly, part of the 50S ribosomal subunit. Forms a cluster with proteins L3 and L19. In the 70S ribosome, L14 and L19 interact and together make contacts with the 16S rRNA in bridges B5 and B8.

In terms of biological role, binds to 23S rRNA. Forms part of two intersubunit bridges in the 70S ribosome. The polypeptide is Large ribosomal subunit protein uL14 (Bacteroides fragilis (strain ATCC 25285 / DSM 2151 / CCUG 4856 / JCM 11019 / LMG 10263 / NCTC 9343 / Onslow / VPI 2553 / EN-2)).